A 198-amino-acid chain; its full sequence is ATP-dependent Clp protease proteolytic subunit (198 aa).

Residue Ser102 is the Nucleophile of the active site. Residue His127 is part of the active site.

The protein belongs to the peptidase S14 family. Fourteen ClpP subunits assemble into 2 heptameric rings which stack back to back to give a disk-like structure with a central cavity, resembling the structure of eukaryotic proteasomes.

Its subcellular location is the cytoplasm. The catalysed reaction is Hydrolysis of proteins to small peptides in the presence of ATP and magnesium. alpha-casein is the usual test substrate. In the absence of ATP, only oligopeptides shorter than five residues are hydrolyzed (such as succinyl-Leu-Tyr-|-NHMec, and Leu-Tyr-Leu-|-Tyr-Trp, in which cleavage of the -Tyr-|-Leu- and -Tyr-|-Trp bonds also occurs).. Functionally, cleaves peptides in various proteins in a process that requires ATP hydrolysis. Has a chymotrypsin-like activity. Plays a major role in the degradation of misfolded proteins. The protein is ATP-dependent Clp protease proteolytic subunit of Brachyspira hyodysenteriae (strain ATCC 49526 / WA1).